The chain runs to 132 residues: AP-2 complex subunit sigma (132 aa).

The protein belongs to the adaptor complexes small subunit family. Adaptor protein complex 2 (AP-2) is a heterotetramer composed of two large adaptins (alpha-type and beta-type subunits), a medium adaptin (mu-type subunit AP50) and a small adaptin (sigma-type subunit AP17). Widely expressed in the embryo, endosperm, leaf and root.

It is found in the cell membrane. It localises to the membrane. Its subcellular location is the coated pit. Functionally, component of the adaptor complexes which link clathrin to receptors in coated vesicles. Clathrin-associated protein complexes are believed to interact with the cytoplasmic tails of membrane proteins, leading to their selection and concentration. AP2S1/AP17 is a subunit of the plasma membrane adaptor. The complex binds polyphosphoinositides. The polypeptide is AP-2 complex subunit sigma (AP-17) (Zea mays (Maize)).